The primary structure comprises 2089 residues: Non-reducing polyketide synthase PKS16 (2089 aa).

Residues 8–243 are N-terminal acylcarrier protein transacylase (SAT) domain (SAT); sequence VLFGDQTVDP…IKLPITAAFH (236 aa). The segment at 342–364 is disordered; that stretch reads AGIEVSRSTEMQPRQEQRTKPRS. Residues 354–364 are compositionally biased toward basic and acidic residues; that stretch reads PRQEQRTKPRS. A Ketosynthase family 3 (KS3) domain is found at 364–793; the sequence is SSDIAIIGYA…GGNTSLLIED (430 aa). Active-site for beta-ketoacyl synthase activity residues include C536, H671, and H710. The malonyl-CoA:ACP transacylase (MAT) domain stretch occupies residues 891–1214; the sequence is VFLFTGQGSQ…SIANAYNSGV (324 aa). A product template (PT) domain region spans residues 1273–1586; sequence TTCLQVIENE…KRTTLQSLLG (314 aa). The segment at 1276–1408 is N-terminal hotdog fold; the sequence is LQVIENETFT…CTVMYGDGHQ (133 aa). The PKS/mFAS DH domain maps to 1276–1582; it reads LQVIENETFT…FQQMKRTTLQ (307 aa). The active-site Proton acceptor; for dehydratase activity is the H1309. The C-terminal hotdog fold stretch occupies residues 1435 to 1582; that stretch reads IHRMLKEMIY…FQQMKRTTLQ (148 aa). The active-site Proton donor; for dehydratase activity is D1495. Residues 1617 to 1694 enclose the Carrier 1 domain; it reads QSPVAGFSKV…ELRAFFLDKM (78 aa). S1654 bears the O-(pantetheine 4'-phosphoryl)serine mark. A disordered region spans residues 1697–1730; the sequence is PQATANDDDSDDSSDDEGPGFSRSQSNSTISTPE. Positions 1702 to 1714 are enriched in acidic residues; sequence NDDDSDDSSDDEG. Over residues 1718-1728 the composition is skewed to polar residues; sequence SRSQSNSTIST. The 78-residue stretch at 1729–1806 folds into the Carrier 2 domain; sequence PEEPDVVNVL…DVQKALGAAP (78 aa). O-(pantetheine 4'-phosphoryl)serine is present on S1766. The segment at 1848–2083 is thioesterase (TE) domain; the sequence is LFLLPDGAGS…VVGGNHFSIM (236 aa).

The protein operates within secondary metabolite biosynthesis. Non-reducing polyketide synthase; part of the gene cluster that mediates the biosynthesis of orcinol depsidone grayanic acid (GRA), the only major secondary metabolite known in C.grayi. The first step consists in the ring and depside synthesis by PKS16 leading to 4-O-demethylsphaerophorin, involving different orcinol-like rings, one with acetyl CoA and the other with octanoyl CoA as the starter. Further depsidone formation by the GRA cluster-specific cytochrome P450 leads to 4-O-demethylgrayanic acid. Finally, the cluster specific O-methyltransferase probably converts the 4-O-demethylgrayanic acid into grayanic acid. The chain is Non-reducing polyketide synthase PKS16 from Cladonia grayi (Gray's cup lichen).